A 275-amino-acid chain; its full sequence is MANPTIIRLQDGNVMPQLGLGVWKASNEEVIAAIHKALEVGYRSIDTATAYQNEEGVGKALKAASVAREELFITTKLWNDDQKRPREALQESLKKLQLDYLDLYLMHWPVPAIDHYVDAWKGMIALQKEGLVKSIGVCNFQIHHLQRLIDETGVTPVINQIELHPLMQQRQLHAWNATHKIQTESWSPLAQGGEGVFDQKVIRELADKYGKTPAQIVIRWHLDCGLVVIPKSVTPSRIAENFAVWDFRLDKDELGEIAKLDQGKRLGPDPDQFGG.

Catalysis depends on tyrosine 51, which acts as the Proton donor. Histidine 107 is a binding site for substrate. 187 to 241 (SPLAQGGEGVFDQKVIRELADKYGKTPAQIVIRWHLDCGLVVIPKSVTPSRIAEN) provides a ligand contact to NADP(+).

The protein belongs to the aldo/keto reductase family. In terms of assembly, monomer.

Its subcellular location is the cytoplasm. It catalyses the reaction hydroxyacetone + NADP(+) = methylglyoxal + NADPH + H(+). Its function is as follows. Aldo-keto reductase that significantly contributes to cellular methylglyoxal detoxification by catalyzing the NADPH-dependent conversion of methylglyoxal to acetol. The sequence is that of Methylglyoxal reductase DkgA from Salmonella typhimurium (strain LT2 / SGSC1412 / ATCC 700720).